The sequence spans 377 residues: Cytoplasmic tRNA 2-thiolation protein 1 (377 aa).

The protein belongs to the TtcA family. CTU1/NCS6/ATPBD3 subfamily.

The protein resides in the cytoplasm. It functions in the pathway tRNA modification; 5-methoxycarbonylmethyl-2-thiouridine-tRNA biosynthesis. Functionally, plays a central role in 2-thiolation of mcm(5)S(2)U at tRNA wobble positions of tRNA(Lys), tRNA(Glu) and tRNA(Gln). Directly binds tRNAs and probably acts by catalyzing adenylation of tRNAs, an intermediate required for 2-thiolation. It is unclear whether it acts as a sulfurtransferase that transfers sulfur from thiocarboxylated URM1 onto the uridine of tRNAs at wobble position. Prior mcm(5) tRNA modification by the elongator complex is required for 2-thiolation. May also be involved in protein urmylation. In Debaryomyces hansenii (strain ATCC 36239 / CBS 767 / BCRC 21394 / JCM 1990 / NBRC 0083 / IGC 2968) (Yeast), this protein is Cytoplasmic tRNA 2-thiolation protein 1.